The primary structure comprises 284 residues: Polyamine aminopropyltransferase (284 aa).

Residues 4–238 enclose the PABS domain; it reads EVWNTERLHD…GPMALGWGSH (235 aa). Glutamine 33 contributes to the S-methyl-5'-thioadenosine binding site. Spermidine contacts are provided by histidine 64 and aspartate 88. Residues glutamate 108 and 140-141 contribute to the S-methyl-5'-thioadenosine site; that span reads DG. The active-site Proton acceptor is aspartate 158. Spermidine is bound at residue 158 to 161; sequence DSTD. Residue proline 165 participates in S-methyl-5'-thioadenosine binding.

The protein belongs to the spermidine/spermine synthase family. In terms of assembly, homodimer or homotetramer.

The protein resides in the cytoplasm. The catalysed reaction is S-adenosyl 3-(methylsulfanyl)propylamine + putrescine = S-methyl-5'-thioadenosine + spermidine + H(+). Its pathway is amine and polyamine biosynthesis; spermidine biosynthesis; spermidine from putrescine: step 1/1. Its function is as follows. Catalyzes the irreversible transfer of a propylamine group from the amino donor S-adenosylmethioninamine (decarboxy-AdoMet) to putrescine (1,4-diaminobutane) to yield spermidine. The chain is Polyamine aminopropyltransferase from Ruegeria sp. (strain TM1040) (Silicibacter sp.).